The sequence spans 87 residues: Beta-mammal toxin Css4 (87 aa).

The first 19 residues, 1-19, serve as a signal peptide directing secretion; that stretch reads MNSLLMITACLALVGTVWA. Residues 20-85 form the LCN-type CS-alpha/beta domain; sequence KEGYLVNSYT…VWPLPNKTCN (66 aa). 4 disulfides stabilise this stretch: Cys-31–Cys-84, Cys-35–Cys-60, Cys-44–Cys-65, and Cys-48–Cys-67. Asparagine amide is present on Asn-85.

Belongs to the long (4 C-C) scorpion toxin superfamily. Sodium channel inhibitor family. Beta subfamily. Expressed by the venom gland.

It localises to the secreted. Beta toxins bind voltage-independently at site-4 of sodium channels (Nav) and shift the voltage of activation toward more negative potentials thereby affecting sodium channel activation and promoting spontaneous and repetitive firing. This toxin is active only on mammals. This is Beta-mammal toxin Css4 from Centruroides suffusus (Durango bark scorpion).